The sequence spans 354 residues: Glutamine synthetase cytosolic isozyme 1-3 (354 aa).

Ser2 is subject to N-acetylserine. Phosphoserine is present on residues Ser2 and Ser48. The 81-residue stretch at 19 to 99 (IIAEYIWIGG…VMCDAYTPAG (81 aa)) folds into the GS beta-grasp domain. Residues 106–354 (KRHNAAKIFS…SMIAETTILG (249 aa)) enclose the GS catalytic domain.

This sequence belongs to the glutamine synthetase family. In terms of assembly, homooctamer. As to expression, expressed in the pericycle in the region of mature root.

It localises to the cytoplasm. The enzyme catalyses L-glutamate + NH4(+) + ATP = L-glutamine + ADP + phosphate + H(+). Low-affinity glutamine synthetase. May contribute to the homeostatic control of glutamine synthesis in roots. The protein is Glutamine synthetase cytosolic isozyme 1-3 (GLN1-3) of Arabidopsis thaliana (Mouse-ear cress).